Here is a 706-residue protein sequence, read N- to C-terminus: D-(-)-3-hydroxybutyrate oligomer hydrolase (706 aa).

The first 27 residues, 1 to 27, serve as a signal peptide directing secretion; it reads MTIIIAGKNTLTLTSLAAAVLALGACG. Ser-311 acts as the Charge relay system in catalysis.

Belongs to the D-(-)-3-hydroxybutyrate oligomer hydrolase family.

The protein resides in the secreted. The enzyme catalyses (3R)-hydroxybutanoate dimer + H2O = 2 (R)-3-hydroxybutanoate + H(+). Its pathway is lipid metabolism; butanoate metabolism. Its function is as follows. Participates in the degradation of poly-3-hydroxybutyrate (PHB). It works downstream of poly(3-hydroxybutyrate) depolymerase, hydrolyzing D(-)-3-hydroxybutyrate oligomers of various length (3HB-oligomers) into 3HB-monomers. The polypeptide is D-(-)-3-hydroxybutyrate oligomer hydrolase (Polaromonas naphthalenivorans (strain CJ2)).